A 266-amino-acid polypeptide reads, in one-letter code: Phosphatidylglycerol--prolipoprotein diacylglyceryl transferase (266 aa).

Helical transmembrane passes span 17–37, 56–76, 92–112, 120–140, 171–191, 199–219, and 233–253; these read LKIH…WLLA, LVFW…VLFY, WKGG…VWWF, FFQL…AGRI, PSQL…LWLF, ASVS…VEFV, and WLTM…ALMV. Arg139 contributes to the a 1,2-diacyl-sn-glycero-3-phospho-(1'-sn-glycerol) binding site.

The protein belongs to the Lgt family.

The protein localises to the cell inner membrane. The enzyme catalyses L-cysteinyl-[prolipoprotein] + a 1,2-diacyl-sn-glycero-3-phospho-(1'-sn-glycerol) = an S-1,2-diacyl-sn-glyceryl-L-cysteinyl-[prolipoprotein] + sn-glycerol 1-phosphate + H(+). Its pathway is protein modification; lipoprotein biosynthesis (diacylglyceryl transfer). Catalyzes the transfer of the diacylglyceryl group from phosphatidylglycerol to the sulfhydryl group of the N-terminal cysteine of a prolipoprotein, the first step in the formation of mature lipoproteins. The protein is Phosphatidylglycerol--prolipoprotein diacylglyceryl transferase of Pseudomonas aeruginosa (strain UCBPP-PA14).